The sequence spans 354 residues: Uroporphyrinogen decarboxylase (354 aa).

Substrate is bound by residues 27–31 (RQAGR), Asp77, Tyr154, Ser209, and His327.

The protein belongs to the uroporphyrinogen decarboxylase family. In terms of assembly, homodimer.

It localises to the cytoplasm. It carries out the reaction uroporphyrinogen III + 4 H(+) = coproporphyrinogen III + 4 CO2. It functions in the pathway porphyrin-containing compound metabolism; protoporphyrin-IX biosynthesis; coproporphyrinogen-III from 5-aminolevulinate: step 4/4. Functionally, catalyzes the decarboxylation of four acetate groups of uroporphyrinogen-III to yield coproporphyrinogen-III. This is Uroporphyrinogen decarboxylase from Shewanella pealeana (strain ATCC 700345 / ANG-SQ1).